The following is a 465-amino-acid chain: ATP synthase subunit beta (465 aa).

152–159 serves as a coordination point for ATP; sequence GGAGVGKT.

This sequence belongs to the ATPase alpha/beta chains family. In terms of assembly, F-type ATPases have 2 components, CF(1) - the catalytic core - and CF(0) - the membrane proton channel. CF(1) has five subunits: alpha(3), beta(3), gamma(1), delta(1), epsilon(1). CF(0) has three main subunits: a(1), b(2) and c(9-12). The alpha and beta chains form an alternating ring which encloses part of the gamma chain. CF(1) is attached to CF(0) by a central stalk formed by the gamma and epsilon chains, while a peripheral stalk is formed by the delta and b chains.

The protein localises to the cell inner membrane. The catalysed reaction is ATP + H2O + 4 H(+)(in) = ADP + phosphate + 5 H(+)(out). Produces ATP from ADP in the presence of a proton gradient across the membrane. The catalytic sites are hosted primarily by the beta subunits. This is ATP synthase subunit beta from Campylobacter curvus (strain 525.92).